The chain runs to 180 residues: Adenine phosphoribosyltransferase (180 aa).

Belongs to the purine/pyrimidine phosphoribosyltransferase family. In terms of assembly, homodimer.

The protein localises to the cytoplasm. The catalysed reaction is AMP + diphosphate = 5-phospho-alpha-D-ribose 1-diphosphate + adenine. The protein operates within purine metabolism; AMP biosynthesis via salvage pathway; AMP from adenine: step 1/1. In terms of biological role, catalyzes a salvage reaction resulting in the formation of AMP, that is energically less costly than de novo synthesis. The chain is Adenine phosphoribosyltransferase from Rhizobium johnstonii (strain DSM 114642 / LMG 32736 / 3841) (Rhizobium leguminosarum bv. viciae).